A 329-amino-acid polypeptide reads, in one-letter code: NAC domain-containing protein 71 (329 aa).

An NAC domain is found at 9–166; that stretch reads LPPGFRFHPT…DWVLCRIYNK (158 aa). The segment at 228 to 281 is disordered; it reads RSGSADRDSMPRLHTDSSGSEHVLSPSPSPDDFPGGGDHDYAESQPSGGCGGWP. The segment covering 230 to 242 has biased composition (basic and acidic residues); it reads GSADRDSMPRLHT.

In terms of assembly, interacts with NAC048 and NAC002. Expressed in roots and embryo. Weakly expressed in callus.

It localises to the nucleus. Transcription activator that binds to the promoter of the stress response gene LEA19. Involved in tolerance to abiotic stresses. In Oryza sativa subsp. japonica (Rice), this protein is NAC domain-containing protein 71.